We begin with the raw amino-acid sequence, 247 residues long: Neurotrophic factor BDNF precursor form (247 aa).

The signal sequence occupies residues 1 to 18 (MTILFLTMVISYFGCMKA). The propeptide occupies 19–128 (APMKEANVRG…AANMSVRVRR (110 aa)). Residue N121 is glycosylated (N-linked (GlcNAc...) asparagine). 3 cysteine pairs are disulfide-bonded: C141–C208, C186–C237, and C196–C239.

This sequence belongs to the NGF-beta family. As to quaternary structure, monomers and homodimers. Binds to NTRK2/TRKB. Can form heterodimers with other neurotrophin family members, such as NTF3 and NTF4 (in vitro), but the physiological relevance of this is not clear. BDNF precursor form: interacts with the heterodimer formed by NGFR and SORCS2. Mature BDNF has much lower affinity for the heterodimer formed by NGFR and SORCS2. N-glycosylated and glycosulfated, contrary to mature BDNF. Post-translationally, mature BDNF is produced by proteolytic removal of the propeptide, catalyzed by a FURIN family member. In addition, the precursor form is proteolytically cleaved within the propeptide, but this is not an obligatory intermediate for the production of mature BDNF. Can be converted into mature BDNF by plasmin (PLG).

The protein localises to the secreted. Important signaling molecule that activates signaling cascades downstream of NTRK2. During development, promotes the survival and differentiation of selected neuronal populations of the peripheral and central nervous systems. Participates in axonal growth, pathfinding and in the modulation of dendritic growth and morphology. Major regulator of synaptic transmission and plasticity at adult synapses in many regions of the CNS. The versatility of BDNF is emphasized by its contribution to a range of adaptive neuronal responses including long-term potentiation (LTP), long-term depression (LTD), certain forms of short-term synaptic plasticity, as well as homeostatic regulation of intrinsic neuronal excitability. In terms of biological role, important signaling molecule that activates signaling cascades downstream of NTRK2. Activates signaling cascades via the heterodimeric receptor formed by NGFR and SORCS2. Signaling via NGFR and SORCS2 plays a role in synaptic plasticity and long-term depression (LTD). Binding to NGFR and SORCS2 promotes neuronal apoptosis. Promotes neuronal growth cone collapse. In Felis catus (Cat), this protein is Neurotrophic factor BDNF precursor form (BDNF).